Here is a 737-residue protein sequence, read N- to C-terminus: Palmitoyltransferase AKR1 (737 aa).

The interval 1–47 (MKQIDSEDSITVPNDTPEDNSASSMQPVMSNLSIEEHQSENEPIEQE) is disordered. Residues 1-304 (MKQIDSEDSI…VYFKKSLHTK (304 aa)) are Cytoplasmic-facing. Positions 9-33 (SITVPNDTPEDNSASSMQPVMSNLS) are enriched in polar residues. ANK repeat units lie at residues 54–84 (PLLSKYHLACQQGDLATVKEIIENGVIDLKH), 90–119 (ERVSGLHWASINNRLSVVRYLISKDVDVNF), 124–153 (LNATPLHWAARYGYVYIVDYLLEHGADPSV), 157–190 (QGFNLLHLSINSSNIMLVIYVLFFVIDDKLDIDC), 194–223 (NGRTALLWAAYQGDSLSVETLLKFRASVKA), and 227–256 (GGFTPLHWGTVKGQAQVLKHLIENGADFFQ). Helical transmembrane passes span 305–325 (LVTFFAPWIFIGVLFKCFASI) and 326–346 (HPIFSLIFSILLGLGMRYTLK). Residues 347-364 (KYVIPAYAQRNTRQSFLK) are Cytoplasmic-facing. The helical transmembrane segment at 365–385 (TPFLAGVFSGSVFWASYTWLT) threads the bilayer. Residues 386 to 396 (RIMPLTLIEEP) are Lumenal-facing. Residues 397–417 (ITNLLFFAGVVLLASLFVKLV) traverse the membrane as a helical segment. The Cytoplasmic segment spans residues 418–493 (RSDPGLIPEE…YNDIGLRNHK (76 aa)). In terms of domain architecture, DHHC spans 450 to 500 (HFCISTWVRKPIRSKFSNFSRALVTRFDHFCPWIYNDIGLRNHKTFLFFIL). Cysteine 480 (S-palmitoyl cysteine intermediate) is an active-site residue. Residues 494–514 (TFLFFILCLETCIFVFLKLCM) traverse the membrane as a helical segment. Residues 515–547 (EYFDVLEDTFEDDYDLNCGIFGEDLCAGFFFDT) are Lumenal-facing. A helical membrane pass occupies residues 548 to 568 (FTFLVLAWTCFQGIWVGFLTF). The Cytoplasmic portion of the chain corresponds to 569-737 (VQLFQTAKGV…ERHYLAEEIV (169 aa)).

This sequence belongs to the DHHC palmitoyltransferase family. AKR/ZDHHC17 subfamily.

The protein resides in the early endosome membrane. The protein localises to the golgi apparatus membrane. It carries out the reaction L-cysteinyl-[protein] + hexadecanoyl-CoA = S-hexadecanoyl-L-cysteinyl-[protein] + CoA. Palmitoyltransferase specific for casein kinase 1. The polypeptide is Palmitoyltransferase AKR1 (AKR1) (Lachancea kluyveri (strain ATCC 58438 / CBS 3082 / BCRC 21498 / NBRC 1685 / JCM 7257 / NCYC 543 / NRRL Y-12651) (Yeast)).